The following is an 805-amino-acid chain: U-box domain-containing protein 32 (805 aa).

Disordered regions lie at residues 181-205 and 226-284; these read SNNR…SEKL and EKDT…EREG. Positions 226 to 239 are enriched in basic and acidic residues; sequence EKDTGQLEREKVEP. Residues 245-257 show a composition bias toward low complexity; sequence FSSGSSSSFGEPV. Residues 331 to 434 adopt a coiled-coil conformation; the sequence is LEGLCIKESS…EVNALRRLVK (104 aa). The Protein kinase domain occupies 460 to 718; it reads FDPSWKLGEG…FIDRMKAPEV (259 aa). Residues 466 to 474 and Lys-487 each bind ATP; that span reads LGEGKYGSV. Residues 734-805 form the U-box domain; that stretch reads RPPSHYLCPI…LAIQDWQNQW (72 aa).

Belongs to the protein kinase superfamily. Ser/Thr protein kinase family.

It catalyses the reaction S-ubiquitinyl-[E2 ubiquitin-conjugating enzyme]-L-cysteine + [acceptor protein]-L-lysine = [E2 ubiquitin-conjugating enzyme]-L-cysteine + N(6)-ubiquitinyl-[acceptor protein]-L-lysine.. Its pathway is protein modification; protein ubiquitination. Functionally, functions as an E3 ubiquitin ligase. The protein is U-box domain-containing protein 32 (PUB32) of Arabidopsis thaliana (Mouse-ear cress).